A 419-amino-acid polypeptide reads, in one-letter code: Serine--tRNA ligase (419 aa).

226–228 serves as a coordination point for L-serine; it reads TSE. ATP-binding positions include 257-259 and V273; that span reads RRE. L-serine is bound at residue E280. 344-347 is a binding site for ATP; that stretch reads ELTS. L-serine is bound at residue T379.

It belongs to the class-II aminoacyl-tRNA synthetase family. Type-1 seryl-tRNA synthetase subfamily. As to quaternary structure, homodimer. The tRNA molecule binds across the dimer.

The protein localises to the cytoplasm. It catalyses the reaction tRNA(Ser) + L-serine + ATP = L-seryl-tRNA(Ser) + AMP + diphosphate + H(+). The catalysed reaction is tRNA(Sec) + L-serine + ATP = L-seryl-tRNA(Sec) + AMP + diphosphate + H(+). It participates in aminoacyl-tRNA biosynthesis; selenocysteinyl-tRNA(Sec) biosynthesis; L-seryl-tRNA(Sec) from L-serine and tRNA(Sec): step 1/1. Catalyzes the attachment of serine to tRNA(Ser). Is also able to aminoacylate tRNA(Sec) with serine, to form the misacylated tRNA L-seryl-tRNA(Sec), which will be further converted into selenocysteinyl-tRNA(Sec). In Corynebacterium diphtheriae (strain ATCC 700971 / NCTC 13129 / Biotype gravis), this protein is Serine--tRNA ligase.